Here is a 79-residue protein sequence, read N- to C-terminus: D-alanyl carrier protein (79 aa).

The Carrier domain maps to 1–77 (MDIKAEVIEI…KIVEGVTELR (77 aa)). Ser-35 carries the post-translational modification O-(pantetheine 4'-phosphoryl)serine.

Belongs to the DltC family. Post-translationally, 4'-phosphopantetheine is transferred from CoA to a specific serine of apo-DCP.

Its subcellular location is the cytoplasm. The protein operates within cell wall biogenesis; lipoteichoic acid biosynthesis. Carrier protein involved in the D-alanylation of lipoteichoic acid (LTA). The loading of thioester-linked D-alanine onto DltC is catalyzed by D-alanine--D-alanyl carrier protein ligase DltA. The DltC-carried D-alanyl group is further transferred to cell membrane phosphatidylglycerol (PG) by forming an ester bond, probably catalyzed by DltD. D-alanylation of LTA plays an important role in modulating the properties of the cell wall in Gram-positive bacteria, influencing the net charge of the cell wall. The polypeptide is D-alanyl carrier protein (Streptococcus sanguinis (strain SK36)).